The chain runs to 203 residues: Ribosome hibernation promotion factor (203 aa).

Belongs to the HPF/YfiA ribosome-associated protein family. Long HPF subfamily. Interacts with 100S ribosomes.

The protein localises to the cytoplasm. Required for dimerization of active 70S ribosomes into 100S ribosomes in stationary phase; 100S ribosomes are translationally inactive and sometimes present during exponential growth. This chain is Ribosome hibernation promotion factor, found in Bradyrhizobium diazoefficiens (strain JCM 10833 / BCRC 13528 / IAM 13628 / NBRC 14792 / USDA 110).